The sequence spans 61 residues: Large ribosomal subunit protein eL24 (61 aa).

The Zn(2+) site is built by C7, C10, C33, and C37. The C4-type zinc-finger motif lies at C7–C37.

The protein belongs to the eukaryotic ribosomal protein eL24 family. In terms of assembly, part of the 50S ribosomal subunit. Forms a cluster with proteins L3 and L14. It depends on Zn(2+) as a cofactor.

Its function is as follows. Binds to the 23S rRNA. The protein is Large ribosomal subunit protein eL24 of Saccharolobus islandicus (strain Y.N.15.51 / Yellowstone #2) (Sulfolobus islandicus).